Consider the following 306-residue polypeptide: Ribonuclease Z (306 aa).

7 residues coordinate Zn(2+): His63, His65, Asp67, His68, His141, Asp211, and His269. Asp67 (proton acceptor) is an active-site residue.

It belongs to the RNase Z family. In terms of assembly, homodimer. Zn(2+) serves as cofactor.

The enzyme catalyses Endonucleolytic cleavage of RNA, removing extra 3' nucleotides from tRNA precursor, generating 3' termini of tRNAs. A 3'-hydroxy group is left at the tRNA terminus and a 5'-phosphoryl group is left at the trailer molecule.. In terms of biological role, zinc phosphodiesterase, which displays some tRNA 3'-processing endonuclease activity. Probably involved in tRNA maturation, by removing a 3'-trailer from precursor tRNA. This Staphylococcus aureus (strain USA300) protein is Ribonuclease Z.